Reading from the N-terminus, the 168-residue chain is N-alpha-acetyltransferase 50 (168 aa).

The 150-residue stretch at 5-154 (IELGDVTPHN…DAHVLQKSLR (150 aa)) folds into the N-acetyltransferase domain. Tyrosine 30 is a binding site for substrate. Tyrosine 72 is a catalytic residue. Residue methionine 74 coordinates substrate. 76–89 (LGCLAPYRRLGIGT) is a binding site for acetyl-CoA. Histidine 111 is a catalytic residue. 116–125 (NESAIDFYQK) is a binding site for CoA. Residues 137–140 (YYKR) form a substrate region.

This sequence belongs to the acetyltransferase family. GNAT subfamily. As to quaternary structure, interacts with naa35.

The protein resides in the cytoplasm. It is found in the nucleus. It catalyses the reaction N-terminal L-methionyl-L-alanyl-[protein] + acetyl-CoA = N-terminal N(alpha)-acetyl-L-methionyl-L-alanyl-[protein] + CoA + H(+). The catalysed reaction is N-terminal L-methionyl-L-seryl-[protein] + acetyl-CoA = N-terminal N(alpha)-acetyl-L-methionyl-L-seryl-[protein] + CoA + H(+). It carries out the reaction N-terminal L-methionyl-L-valyl-[protein] + acetyl-CoA = N-terminal N(alpha)-acetyl-L-methionyl-L-valyl-[protein] + CoA + H(+). The enzyme catalyses N-terminal L-methionyl-L-threonyl-[protein] + acetyl-CoA = N-terminal N(alpha)-acetyl-L-methionyl-L-threonyl-[protein] + CoA + H(+). It catalyses the reaction N-terminal L-methionyl-L-lysyl-[protein] + acetyl-CoA = N-terminal N(alpha)-acetyl-L-methionyl-L-lysyl-[protein] + CoA + H(+). The catalysed reaction is N-terminal L-methionyl-L-leucyl-[protein] + acetyl-CoA = N-terminal N(alpha)-acetyl-L-methionyl-L-leucyl-[protein] + CoA + H(+). It carries out the reaction N-terminal L-methionyl-L-phenylalanyl-[protein] + acetyl-CoA = N-terminal N(alpha)-acetyl-L-methionyl-L-phenylalanyl-[protein] + CoA + H(+). The enzyme catalyses N-terminal L-methionyl-L-tyrosyl-[protein] + acetyl-CoA = N-terminal N(alpha)-acetyl-L-methionyl-L-tyrosyl-[protein] + CoA + H(+). Functionally, N-alpha-acetyltransferase that acetylates the N-terminus of proteins that retain their initiating methionine. Has a broad substrate specificity: able to acetylate the initiator methionine of most peptides, except for those with a proline in second position. Also displays N-epsilon-acetyltransferase activity by mediating acetylation of the side chain of specific lysines on proteins. The relevance of N-epsilon-acetyltransferase activity is however unclear. Required for sister chromatid cohesion during mitosis by promoting binding of CDCA5/sororin to cohesin. Essential in embryonic cell proliferation and survival. The chain is N-alpha-acetyltransferase 50 (naa50) from Danio rerio (Zebrafish).